The sequence spans 456 residues: Adenylosuccinate synthetase isozyme 2 (456 aa).

Positions 1–24 (MAFAETYPAASSLPNGDCGRPRAR) are disordered. GTP is bound by residues 39 to 45 (GDEGKGK) and 67 to 69 (GHT). The active-site Proton acceptor is the Asp40. Mg(2+) is bound by residues Asp40 and Gly67. Asp40 contacts substrate. Residues 40–43 (DEGK), 65–68 (NAGH), Thr162, Arg176, Asn255, Thr270, and Arg334 contribute to the IMP site. The Proton donor role is filled by His68. 330–336 (VTTGRKR) contacts substrate. GTP-binding positions include Arg336, 362–364 (KLD), and 444–447 (GVGK).

The protein belongs to the adenylosuccinate synthetase family. Homodimer. Mg(2+) serves as cofactor.

It is found in the cytoplasm. The protein localises to the mitochondrion. The catalysed reaction is IMP + L-aspartate + GTP = N(6)-(1,2-dicarboxyethyl)-AMP + GDP + phosphate + 2 H(+). It participates in purine metabolism; AMP biosynthesis via de novo pathway; AMP from IMP: step 1/2. With respect to regulation, inhibited competitively by AMP and IMP and non-competitively by fructose 1,6-bisphosphate. Plays an important role in the de novo pathway and in the salvage pathway of purine nucleotide biosynthesis. Catalyzes the first committed step in the biosynthesis of AMP from IMP. This Homo sapiens (Human) protein is Adenylosuccinate synthetase isozyme 2.